Consider the following 198-residue polypeptide: MTTILQINSSARSQGAQSTLLANELTAKLQQSNPGAQVVVRNLHEDALPHLDDAILGAFFTPAEQRTAEQQAIAARSEALIAELQAADIVVIGAPLYNFGISSQLKTYFDFIARAGITFKYGANGPEGLVKGKKVFVVSARGGKYAGTPGDSQTPYLTTFLGFLGMTDVSFIYAEGLNMGPDAASAALAGAREAIAAA.

An FMN-binding site is contributed by S10.

It belongs to the azoreductase type 1 family. Homodimer. It depends on FMN as a cofactor.

It carries out the reaction 2 a quinone + NADH + H(+) = 2 a 1,4-benzosemiquinone + NAD(+). The enzyme catalyses N,N-dimethyl-1,4-phenylenediamine + anthranilate + 2 NAD(+) = 2-(4-dimethylaminophenyl)diazenylbenzoate + 2 NADH + 2 H(+). Its function is as follows. Quinone reductase that provides resistance to thiol-specific stress caused by electrophilic quinones. In terms of biological role, also exhibits azoreductase activity. Catalyzes the reductive cleavage of the azo bond in aromatic azo compounds to the corresponding amines. The polypeptide is FMN-dependent NADH:quinone oxidoreductase (Paraburkholderia phymatum (strain DSM 17167 / CIP 108236 / LMG 21445 / STM815) (Burkholderia phymatum)).